We begin with the raw amino-acid sequence, 269 residues long: 2-dehydro-3-deoxyphosphooctonate aldolase (269 aa).

This sequence belongs to the KdsA family.

Its subcellular location is the cytoplasm. It catalyses the reaction D-arabinose 5-phosphate + phosphoenolpyruvate + H2O = 3-deoxy-alpha-D-manno-2-octulosonate-8-phosphate + phosphate. The protein operates within carbohydrate biosynthesis; 3-deoxy-D-manno-octulosonate biosynthesis; 3-deoxy-D-manno-octulosonate from D-ribulose 5-phosphate: step 2/3. It participates in bacterial outer membrane biogenesis; lipopolysaccharide biosynthesis. The chain is 2-dehydro-3-deoxyphosphooctonate aldolase from Chlamydia felis (strain Fe/C-56) (Chlamydophila felis).